The following is a 473-amino-acid chain: Photosystem II CP43 reaction center protein (473 aa).

Residues 1–14 (MKTLYSLRRFYHVE) constitute a propeptide that is removed on maturation. The residue at position 15 (Thr15) is an N-acetylthreonine. Thr15 carries the post-translational modification Phosphothreonine. 5 helical membrane-spanning segments follow: residues 69-93 (LFEVAHFVPEKPMYEQGLILLPHLA), 134-155 (LLGPETLEESFPFFGYVWKDRN), 178-200 (KALYFGGVYDTWAPGGGDVRKIT), 255-275 (KPFAWARRALVWSGEAYLSYS), and 291-312 (WFNNTAYPSEFYGPTGPEASQA). [CaMn4O5] cluster is bound at residue Glu367. The chain crosses the membrane as a helical span at residues 447 to 471 (RARAAAAGFEKGIDRDFEPVLFMTP).

Belongs to the PsbB/PsbC family. PsbC subfamily. PSII is composed of 1 copy each of membrane proteins PsbA, PsbB, PsbC, PsbD, PsbE, PsbF, PsbH, PsbI, PsbJ, PsbK, PsbL, PsbM, PsbT, PsbX, PsbY, PsbZ, Psb30/Ycf12, at least 3 peripheral proteins of the oxygen-evolving complex and a large number of cofactors. It forms dimeric complexes. The cofactor is Binds multiple chlorophylls and provides some of the ligands for the Ca-4Mn-5O cluster of the oxygen-evolving complex. It may also provide a ligand for a Cl- that is required for oxygen evolution. PSII binds additional chlorophylls, carotenoids and specific lipids..

Its subcellular location is the plastid. It is found in the chloroplast thylakoid membrane. Functionally, one of the components of the core complex of photosystem II (PSII). It binds chlorophyll and helps catalyze the primary light-induced photochemical processes of PSII. PSII is a light-driven water:plastoquinone oxidoreductase, using light energy to abstract electrons from H(2)O, generating O(2) and a proton gradient subsequently used for ATP formation. The protein is Photosystem II CP43 reaction center protein of Solanum tuberosum (Potato).